The primary structure comprises 82 residues: Small ribosomal subunit protein bTHXm (82 aa).

A mitochondrion-targeting transit peptide spans 1–22; that stretch reads MAMRLAAAAAFVRRLVPARNPV. The disordered stretch occupies residues 34-56; sequence RGDKKTKRGKRFKGSYGNARPKR. The segment covering 37–46 has biased composition (basic residues); that stretch reads KKTKRGKRFK.

It belongs to the bacterial ribosomal protein bTHX family.

It is found in the mitochondrion. The protein is Small ribosomal subunit protein bTHXm of Oryza sativa subsp. japonica (Rice).